A 713-amino-acid polypeptide reads, in one-letter code: Calpastatin (713 aa).

2 disordered regions span residues 1-187 and 211-506; these read MNPT…LDPM and DKKE…PVLP. Residues 21 to 30 show a composition bias toward basic residues; it reads PNKKRHKKQA. Lys32 is covalently cross-linked (Glycyl lysine isopeptide (Lys-Gly) (interchain with G-Cter in SUMO2)). Residues 46 to 63 show a composition bias toward basic and acidic residues; it reads VVHEKKTQEVKPKEHPEP. An N6-acetyllysine modification is found at Lys50. Residues 85 to 94 are compositionally biased toward polar residues; that stretch reads SRSNEQPTSE. Ser87 and Ser134 each carry phosphoserine. Thr136 is subject to Phosphothreonine. The Inhibitory domain 1 repeat unit spans residues 171–223; sequence TEEDNTTYTGPEVLDPMSSTYIEELGKREVTLPPKYRELLDKKEGIPVPPPDT. Position 244 is a phosphoserine (Ser244). 3 stretches are compositionally biased toward basic and acidic residues: residues 248-258, 304-332, and 342-367; these read DGKKTEKEKST, RKSEPELDLSSIKEIDEAKAKEEKLKKCG, and YRLKPAMDKDGKPLLPEAEEKPKPLS. An Inhibitory domain 2 repeat occupies 307 to 359; it reads EPELDLSSIKEIDEAKAKEEKLKKCGEDDETVPPEYRLKPAMDKDGKPLLPEA. Phosphoserine occurs at positions 367, 369, and 376. The span at 370 to 379 shows a compositional bias: acidic residues; the sequence is ELIDELSEDF. The span at 380-397 shows a compositional bias: basic and acidic residues; it reads DQSKRKEKQSKPTEKTKE. Phosphoserine is present on Ser441. Positions 443–502 are enriched in basic and acidic residues; the sequence is GKKEADPEDGKPVEDKVKEKAKEEDREKLGEKEETIPPDYRLEEVKDKDGKTLPHKDPKE. The stretch at 447–500 is one Inhibitory domain 3 repeat; sequence ADPEDGKPVEDKVKEKAKEEDREKLGEKEETIPPDYRLEEVKDKDGKTLPHKDP. Residues Ser517 and Ser528 each carry the phosphoserine modification. A disordered region spans residues 536 to 713; sequence SAAVSEVVSQ…KQKSDGKSTS (178 aa). Over residues 542–553 the composition is skewed to polar residues; it reads VVSQTSAPTTHS. Phosphoserine is present on residues Ser575 and Ser577. The Inhibitory domain 4 repeat unit spans residues 583-636; that stretch reads PDPDENKPIEDKVKEKAEAEHRDKLGERDDTIPPEYRHLLDKDEEGKSTKPPTK. 2 stretches are compositionally biased toward basic and acidic residues: residues 583–646 and 691–713; these read PDPD…KPEA and KAKDSTKAKEETSKQKSDGKSTS.

It belongs to the protease inhibitor I27 (calpastatin) family.

In terms of biological role, specific inhibition of calpain (calcium-dependent cysteine protease). Plays a key role in postmortem tenderization of meat and have been proposed to be involved in muscle protein degradation in living tissue. The protein is Calpastatin (CAST) of Sus scrofa (Pig).